Here is a 649-residue protein sequence, read N- to C-terminus: Threonine--tRNA ligase (649 aa).

The TGS domain maps to 1 to 63; the sequence is MSSIKITFPD…KEDGSIEIIT (63 aa). Residues 245–543 form a catalytic region; the sequence is DHRVIGNELD…LTEMYKGAFP (299 aa). Cys339, His390, and His520 together coordinate Zn(2+).

Belongs to the class-II aminoacyl-tRNA synthetase family. In terms of assembly, homodimer. The cofactor is Zn(2+).

It localises to the cytoplasm. The enzyme catalyses tRNA(Thr) + L-threonine + ATP = L-threonyl-tRNA(Thr) + AMP + diphosphate + H(+). Functionally, catalyzes the attachment of threonine to tRNA(Thr) in a two-step reaction: L-threonine is first activated by ATP to form Thr-AMP and then transferred to the acceptor end of tRNA(Thr). Also edits incorrectly charged L-seryl-tRNA(Thr). The chain is Threonine--tRNA ligase from Ligilactobacillus salivarius (strain UCC118) (Lactobacillus salivarius).